The sequence spans 66 residues: Large ribosomal subunit protein bL35 (66 aa).

This sequence belongs to the bacterial ribosomal protein bL35 family.

In Azorhizobium caulinodans (strain ATCC 43989 / DSM 5975 / JCM 20966 / LMG 6465 / NBRC 14845 / NCIMB 13405 / ORS 571), this protein is Large ribosomal subunit protein bL35.